The chain runs to 85 residues: U4-theraphotoxin-Hhn1d (85 aa).

Positions M1–A22 are cleaved as a signal peptide. A propeptide spanning residues E23–R48 is cleaved from the precursor. Cystine bridges form between C52-C66, C56-C77, and C71-C82.

The protein belongs to the neurotoxin 12 (Hwtx-2) family. 02 (Hwtx-2) subfamily. As to expression, expressed by the venom gland.

It localises to the secreted. Postsynaptic neurotoxin. The sequence is that of U4-theraphotoxin-Hhn1d from Cyriopagopus hainanus (Chinese bird spider).